A 467-amino-acid chain; its full sequence is 3-isopropylmalate dehydratase large subunit (467 aa).

Residues C348, C408, and C411 each contribute to the [4Fe-4S] cluster site. Residues 417-445 (DQLTPGERSASTSNRNFEGRQGKGGRTHL) form a disordered region.

Belongs to the aconitase/IPM isomerase family. LeuC type 1 subfamily. In terms of assembly, heterodimer of LeuC and LeuD. [4Fe-4S] cluster serves as cofactor.

It carries out the reaction (2R,3S)-3-isopropylmalate = (2S)-2-isopropylmalate. Its pathway is amino-acid biosynthesis; L-leucine biosynthesis; L-leucine from 3-methyl-2-oxobutanoate: step 2/4. Its function is as follows. Catalyzes the isomerization between 2-isopropylmalate and 3-isopropylmalate, via the formation of 2-isopropylmaleate. This Saccharopolyspora erythraea (strain ATCC 11635 / DSM 40517 / JCM 4748 / NBRC 13426 / NCIMB 8594 / NRRL 2338) protein is 3-isopropylmalate dehydratase large subunit.